The sequence spans 311 residues: tRNA-cytidine(32) 2-sulfurtransferase (311 aa).

A PP-loop motif motif is present at residues 47–52; that stretch reads SGGKDS. Residues Cys-122, Cys-125, and Cys-213 each coordinate [4Fe-4S] cluster.

Belongs to the TtcA family. In terms of assembly, homodimer. It depends on Mg(2+) as a cofactor. Requires [4Fe-4S] cluster as cofactor.

It is found in the cytoplasm. The catalysed reaction is cytidine(32) in tRNA + S-sulfanyl-L-cysteinyl-[cysteine desulfurase] + AH2 + ATP = 2-thiocytidine(32) in tRNA + L-cysteinyl-[cysteine desulfurase] + A + AMP + diphosphate + H(+). Its pathway is tRNA modification. Functionally, catalyzes the ATP-dependent 2-thiolation of cytidine in position 32 of tRNA, to form 2-thiocytidine (s(2)C32). The sulfur atoms are provided by the cysteine/cysteine desulfurase (IscS) system. The protein is tRNA-cytidine(32) 2-sulfurtransferase of Escherichia coli O45:K1 (strain S88 / ExPEC).